We begin with the raw amino-acid sequence, 452 residues long: Tubulin alpha-1 chain (452 aa).

GTP is bound at residue Gln11. Residue Lys40 is modified to N6-acetyllysine. GTP-binding residues include Glu71, Gly144, Thr145, Thr179, Asn206, and Asn228. Glu71 provides a ligand contact to Mg(2+). Residue Glu254 is part of the active site. Residues 430–452 (KDYEEVGAESGDGDDDGLGEEEY) form a disordered region. A compositionally biased stretch (acidic residues) spans 431–452 (DYEEVGAESGDGDDDGLGEEEY).

It belongs to the tubulin family. As to quaternary structure, dimer of alpha and beta chains. A typical microtubule is a hollow water-filled tube with an outer diameter of 25 nm and an inner diameter of 15 nM. Alpha-beta heterodimers associate head-to-tail to form protofilaments running lengthwise along the microtubule wall with the beta-tubulin subunit facing the microtubule plus end conferring a structural polarity. Microtubules usually have 13 protofilaments but different protofilament numbers can be found in some organisms and specialized cells. Mg(2+) is required as a cofactor. In terms of processing, undergoes a tyrosination/detyrosination cycle, the cyclic removal and re-addition of a C-terminal tyrosine residue by the enzymes tubulin tyrosine carboxypeptidase (TTCP) and tubulin tyrosine ligase (TTL), respectively. Acetylation of alpha chains at Lys-40 stabilizes microtubules and affects affinity and processivity of microtubule motors. This modification has a role in multiple cellular functions, ranging from cell motility, cell cycle progression or cell differentiation to intracellular trafficking and signaling.

It localises to the cytoplasm. The protein localises to the cytoskeleton. The catalysed reaction is GTP + H2O = GDP + phosphate + H(+). Its function is as follows. Tubulin is the major constituent of microtubules, a cylinder consisting of laterally associated linear protofilaments composed of alpha- and beta-tubulin heterodimers. Microtubules grow by the addition of GTP-tubulin dimers to the microtubule end, where a stabilizing cap forms. Below the cap, tubulin dimers are in GDP-bound state, owing to GTPase activity of alpha-tubulin. This Pisum sativum (Garden pea) protein is Tubulin alpha-1 chain (TUBA1).